The chain runs to 162 residues: Peptidyl-prolyl cis-trans isomerase (162 aa).

Ser2 is modified (N-acetylserine). In terms of domain architecture, PPIase cyclophilin-type spans 5 to 161 (YFDVEADGQP…ARIVVAKSGE (157 aa)). Residues Lys29 and Lys42 each participate in a glycyl lysine isopeptide (Lys-Gly) (interchain with G-Cter in ubiquitin) cross-link. At Thr71 the chain carries Phosphothreonine. Residues Lys123 and Lys139 each participate in a glycyl lysine isopeptide (Lys-Gly) (interchain with G-Cter in ubiquitin) cross-link. Ser142 and Ser145 each carry phosphoserine. Glycyl lysine isopeptide (Lys-Gly) (interchain with G-Cter in ubiquitin) cross-links involve residues Lys151 and Lys158.

The protein belongs to the cyclophilin-type PPIase family. PPIase A subfamily. Interacts with a complex composed of SIN3 and RPD3. Identified in the Set3C complex with HOS2, HST1, SNT1, SIF2, HOS4/YIL112W and SET3.

It is found in the cytoplasm. The protein resides in the nucleus. The protein localises to the mitochondrion intermembrane space. It catalyses the reaction [protein]-peptidylproline (omega=180) = [protein]-peptidylproline (omega=0). Its activity is regulated as follows. Binds cyclosporin A (CsA). CsA mediates some of its effects via an inhibitory action on PPIase. In terms of biological role, PPIases accelerate the folding of proteins. It catalyzes the cis-trans isomerization of proline imidic peptide bonds in oligopeptides. Involved in histone deacetylase complexes, suggesting a function in chromatin. Imports fructose-1,6-bisphosphatase (FBPase) into the intermediate vacuole import and degradation (Vid) vesicles. Regulates the meiotic gene program via the Set3C histone deacetylase complex to promote efficient sporulation, and the prolyl-isomerase activity is required for this function. In Saccharomyces cerevisiae (strain ATCC 204508 / S288c) (Baker's yeast), this protein is Peptidyl-prolyl cis-trans isomerase (CPR1).